The primary structure comprises 365 residues: Alanine racemase (365 aa).

Catalysis depends on Lys-32, which acts as the Proton acceptor; specific for D-alanine. At Lys-32 the chain carries N6-(pyridoxal phosphate)lysine. Arg-128 provides a ligand contact to substrate. The active-site Proton acceptor; specific for L-alanine is the Tyr-257. Met-305 is a binding site for substrate.

The protein belongs to the alanine racemase family. Requires pyridoxal 5'-phosphate as cofactor.

It catalyses the reaction L-alanine = D-alanine. Its pathway is amino-acid biosynthesis; D-alanine biosynthesis; D-alanine from L-alanine: step 1/1. In terms of biological role, catalyzes the interconversion of L-alanine and D-alanine. May also act on other amino acids. The chain is Alanine racemase (alr) from Francisella tularensis subsp. tularensis (strain SCHU S4 / Schu 4).